The primary structure comprises 139 residues: Insulin-like growth factor (139 aa).

Positions 1-38 (YIRRVRQGSIYSLLVESQQWCKLTLTLLLLLALLTRCT) are cleaved as a signal peptide. A b region spans residues 39–67 (LSETLCGSELVDTLQFVCDDRGFFFVPQH). Residues 68–82 (VPPRRGAHRRSRARK) are c. The interval 83–103 (GIVEECCFKGCSLRLLEMYCA) is a. A d region spans residues 104–113 (RPSKAERDVA). Positions 108–139 (AERDVARPRQRPHRASQHSRRGSQSRGRGRSR) are disordered. Residues 114–139 (RPRQRPHRASQHSRRGSQSRGRGRSR) are e. The segment covering 115-139 (PRQRPHRASQHSRRGSQSRGRGRSR) has biased composition (basic residues).

The protein belongs to the insulin family.

The protein localises to the secreted. Functionally, the insulin-like growth factors, isolated from plasma, are structurally and functionally related to insulin but have a much higher growth-promoting activity. This chain is Insulin-like growth factor, found in Myxine glutinosa (Atlantic hagfish).